The sequence spans 311 residues: Methionyl-tRNA formyltransferase (311 aa).

Residue 110–113 (SLLP) participates in (6S)-5,6,7,8-tetrahydrofolate binding.

The protein belongs to the Fmt family.

The catalysed reaction is L-methionyl-tRNA(fMet) + (6R)-10-formyltetrahydrofolate = N-formyl-L-methionyl-tRNA(fMet) + (6S)-5,6,7,8-tetrahydrofolate + H(+). Its function is as follows. Attaches a formyl group to the free amino group of methionyl-tRNA(fMet). The formyl group appears to play a dual role in the initiator identity of N-formylmethionyl-tRNA by promoting its recognition by IF2 and preventing the misappropriation of this tRNA by the elongation apparatus. This chain is Methionyl-tRNA formyltransferase, found in Streptococcus pneumoniae (strain P1031).